The primary structure comprises 489 residues: UDP-N-acetylmuramate--L-alanine ligase (489 aa).

128–134 (GTHGKTT) is an ATP binding site.

Belongs to the MurCDEF family.

It localises to the cytoplasm. It carries out the reaction UDP-N-acetyl-alpha-D-muramate + L-alanine + ATP = UDP-N-acetyl-alpha-D-muramoyl-L-alanine + ADP + phosphate + H(+). It functions in the pathway cell wall biogenesis; peptidoglycan biosynthesis. Functionally, cell wall formation. This chain is UDP-N-acetylmuramate--L-alanine ligase, found in Shewanella woodyi (strain ATCC 51908 / MS32).